We begin with the raw amino-acid sequence, 154 residues long: Urease accessory protein UreE (154 aa).

The interval 135-154 (YGHGRTFGHDHGHAHDHHHA) is disordered.

Belongs to the UreE family.

It is found in the cytoplasm. In terms of biological role, involved in urease metallocenter assembly. Binds nickel. Probably functions as a nickel donor during metallocenter assembly. This chain is Urease accessory protein UreE, found in Paracoccus denitrificans (strain Pd 1222).